Here is a 430-residue protein sequence, read N- to C-terminus: Resistance to inhibitors of cholinesterase protein 19 (430 aa).

The 205-residue stretch at 56–260 folds into the AH domain; sequence ASDNELDTCL…TSRAFETLAE (205 aa). Positions 279 to 342 are disordered; sequence GTKPERERKS…SPLIEDVDDE (64 aa). Over residues 281 to 294 the composition is skewed to basic and acidic residues; the sequence is KPERERKSEKEESA.

As to quaternary structure, interacts with the GTPase activator protein tbc-8; the interaction is direct and may be required for the activation of rab-2 and dense vesicle maturation in cholinergic motoneurons. Interacts with rund-1. In terms of tissue distribution, expressed in all neurons. Highly expressed in m2 pharyngeal neurons and some pharyngeal interneurons. Also expressed in the excretory canal and the gland cells located just below the nerve ring in the head.

It is found in the cytoplasm. The protein resides in the cytoplasmic vesicle membrane. Functionally, may be involved in neurotransmitter secretion. In association with the GTPase activator protein tbc-8 activates rab-2 during dense core vesicle maturation in cholinergic motoneurons. This Caenorhabditis elegans protein is Resistance to inhibitors of cholinesterase protein 19.